Here is a 78-residue protein sequence, read N- to C-terminus: Acyl carrier protein (78 aa).

Residues S2–S77 form the Carrier domain. At S37 the chain carries O-(pantetheine 4'-phosphoryl)serine.

The protein belongs to the acyl carrier protein (ACP) family. 4'-phosphopantetheine is transferred from CoA to a specific serine of apo-ACP by AcpS. This modification is essential for activity because fatty acids are bound in thioester linkage to the sulfhydryl of the prosthetic group.

It localises to the cytoplasm. It participates in lipid metabolism; fatty acid biosynthesis. Carrier of the growing fatty acid chain in fatty acid biosynthesis. In Bartonella bacilliformis (strain ATCC 35685 / KC583 / Herrer 020/F12,63), this protein is Acyl carrier protein.